We begin with the raw amino-acid sequence, 487 residues long: uncharacterized protein (487 aa).

ABC transporter domains are found at residues 5–249 and 265–487; these read VKFA…IPVK and ISME…VIHA. Residue 297-304 participates in ATP binding; it reads GSNGSGKT.

It belongs to the ABC transporter superfamily.

Its subcellular location is the mitochondrion. This is an uncharacterized protein from Schizosaccharomyces pombe (strain 972 / ATCC 24843) (Fission yeast).